Reading from the N-terminus, the 248-residue chain is tRNA pseudouridine synthase A (248 aa).

The Nucleophile role is filled by Asp-53. Residue Tyr-111 coordinates substrate.

It belongs to the tRNA pseudouridine synthase TruA family. Homodimer.

It catalyses the reaction uridine(38/39/40) in tRNA = pseudouridine(38/39/40) in tRNA. Its function is as follows. Formation of pseudouridine at positions 38, 39 and 40 in the anticodon stem and loop of transfer RNAs. The protein is tRNA pseudouridine synthase A of Listeria monocytogenes serotype 4a (strain HCC23).